Reading from the N-terminus, the 409-residue chain is Nucleoprotein (409 aa).

Disordered regions lie at residues 1-32, 44-63, 120-145, and 164-193; these read MASG…SSGN, LNSP…ENLK, GADT…LRFS, and RSGR…SGAE. Low complexity predominate over residues 15-31; that stretch reads PVIKLGGPKPPKVGSSG. Residues 29–160 form an RNA-binding region; that stretch reads SSGNASWFQA…GNFRWDFIPI (132 aa). Residues 31 to 156 enclose the CoV N NTD domain; that stretch reads GNASWFQALK…GGPDGNFRWD (126 aa). Residues 164–179 show a composition bias toward low complexity; the sequence is RSGRSTAASSAASSRA. Positions 180–192 are enriched in basic and acidic residues; that stretch reads PSRDGSRGRRSGA. Position 190 is a phosphoserine; by host (Ser190). The CoV N CTD domain occupies 215-331; that stretch reads TKAKADEMAH…QCVDGVGTRP (117 aa). The tract at residues 226–333 is dimerization; the sequence is RYCKRTIPPG…VDGVGTRPKD (108 aa). The cysteines at positions 320 and 323 are disulfide-linked. Positions 327-409 are disordered; the sequence is VGTRPKDDEP…GESALGENEL (83 aa). The segment covering 341 to 355 has biased composition (polar residues); the sequence is RPNSRPATRTSSPAP. Over residues 368-384 the composition is skewed to basic and acidic residues; sequence KQDDEVDKALTSDEERN. At Thr378 the chain carries Phosphothreonine; by host. Ser379 carries the post-translational modification Phosphoserine; by host.

The protein belongs to the gammacoronavirus nucleocapsid protein family. As to quaternary structure, homooligomer. Both monomeric and oligomeric forms interact with RNA. Interacts with protein M. Interacts with NSP3; this interaction serves to tether the genome to the newly translated replicase-transcriptase complex at a very early stage of infection. Post-translationally, ADP-ribosylated. The ADP-ribosylation is retained in the virion during infection. In terms of processing, phosphorylated on serine and threonine residues.

It is found in the virion. The protein resides in the host endoplasmic reticulum-Golgi intermediate compartment. The protein localises to the host Golgi apparatus. Packages the positive strand viral genome RNA into a helical ribonucleocapsid (RNP) and plays a fundamental role during virion assembly through its interactions with the viral genome and membrane protein M. Plays an important role in enhancing the efficiency of subgenomic viral RNA transcription as well as viral replication. This is Nucleoprotein from Avian infectious bronchitis virus (strain D1466) (IBV).